The primary structure comprises 326 residues: Vitamin B12 import system permease protein BtuC (326 aa).

Helical transmembrane passes span 15 to 35 (WLLS…CAGE), 61 to 81 (LAVL…QALF), 88 to 108 (PGLL…VLLG), 112 to 132 (LPGW…TLIL), 146 to 166 (LLAG…AIYF), 184 to 204 (GGVD…LIWI), 240 to 260 (GWMV…GLVI), 274 to 294 (VLLP…DVVA), and 302 to 322 (ELPI…WLLL).

This sequence belongs to the binding-protein-dependent transport system permease family. FecCD subfamily. The complex is composed of two ATP-binding proteins (BtuD), two transmembrane proteins (BtuC) and a solute-binding protein (BtuF).

It is found in the cell inner membrane. Its function is as follows. Part of the ABC transporter complex BtuCDF involved in vitamin B12 import. Involved in the translocation of the substrate across the membrane. The polypeptide is Vitamin B12 import system permease protein BtuC (Salmonella enteritidis PT4 (strain P125109)).